The primary structure comprises 546 residues: 3-(3-hydroxy-phenyl)propionate/3-hydroxycinnamic acid hydroxylase 2 (546 aa).

FAD is bound by residues 10–39 (SVAI…VVER) and 278–288 (FVAGRIALVGD).

This sequence belongs to the PheA/TfdB FAD monooxygenase family. Requires FAD as cofactor.

It carries out the reaction 3-(3-hydroxyphenyl)propanoate + NADH + O2 + H(+) = 3-(2,3-dihydroxyphenyl)propanoate + NAD(+) + H2O. The enzyme catalyses (2E)-3-(3-hydroxyphenyl)prop-2-enoate + NADH + O2 + H(+) = (2E)-3-(2,3-dihydroxyphenyl)prop-2-enoate + NAD(+) + H2O. It participates in aromatic compound metabolism; 3-phenylpropanoate degradation. Functionally, catalyzes the insertion of one atom of molecular oxygen into position 2 of the phenyl ring of 3-(3-hydroxyphenyl)propionate (3-HPP) and hydroxycinnamic acid (3HCI). The polypeptide is 3-(3-hydroxy-phenyl)propionate/3-hydroxycinnamic acid hydroxylase 2 (Burkholderia vietnamiensis (strain G4 / LMG 22486) (Burkholderia cepacia (strain R1808))).